The chain runs to 207 residues: Small ribosomal subunit protein uS4 (207 aa).

The tract at residues 31–53 (KAKFDSKPGQHGRTSGARTSDFG) is disordered. In terms of domain architecture, S4 RNA-binding spans 97–157 (SRLDNVVYRM…EKSKKQARIV (61 aa)).

This sequence belongs to the universal ribosomal protein uS4 family. As to quaternary structure, part of the 30S ribosomal subunit. Contacts protein S5. The interaction surface between S4 and S5 is involved in control of translational fidelity.

In terms of biological role, one of the primary rRNA binding proteins, it binds directly to 16S rRNA where it nucleates assembly of the body of the 30S subunit. Functionally, with S5 and S12 plays an important role in translational accuracy. The polypeptide is Small ribosomal subunit protein uS4 (Paracidovorax citrulli (strain AAC00-1) (Acidovorax citrulli)).